Reading from the N-terminus, the 503-residue chain is Protein DETOXIFICATION 36 (503 aa).

12 consecutive transmembrane segments (helical) span residues 54-74 (LFHL…MSML), 87-107 (LAAA…LMLG), 137-157 (IVLV…KPLL), 166-186 (VASV…AYAV), 203-223 (SAYI…LSVF), 225-245 (FGWG…IIVL), 271-293 (GLWD…SWYS), 313-333 (LAIC…FNAA), 355-375 (AVTT…ILSW), 399-419 (FLAI…VAVG), 427-447 (AYVN…VLGF), and 456-476 (IWTG…IVTF).

The protein belongs to the multi antimicrobial extrusion (MATE) (TC 2.A.66.1) family.

The protein localises to the membrane. The polypeptide is Protein DETOXIFICATION 36 (Arabidopsis thaliana (Mouse-ear cress)).